The chain runs to 448 residues: Probable D-serine dehydratase (448 aa).

K119 bears the N6-(pyridoxal phosphate)lysine mark.

This sequence belongs to the serine/threonine dehydratase family. DsdA subfamily. Requires pyridoxal 5'-phosphate as cofactor.

The catalysed reaction is D-serine = pyruvate + NH4(+). This Pseudomonas aeruginosa (strain UCBPP-PA14) protein is Probable D-serine dehydratase.